The primary structure comprises 448 residues: Signal recognition particle protein (448 aa).

Residues 101-108 (GLQGSGKT), 182-186 (DSAGR), and 240-243 (SKFD) each bind GTP.

This sequence belongs to the GTP-binding SRP family. SRP54 subfamily. As to quaternary structure, part of the signal recognition particle protein translocation system, which is composed of SRP and FtsY. SRP is a ribonucleoprotein composed of Ffh and a 4.5S RNA molecule.

It is found in the cytoplasm. It carries out the reaction GTP + H2O = GDP + phosphate + H(+). Involved in targeting and insertion of nascent membrane proteins into the cytoplasmic membrane. Binds to the hydrophobic signal sequence of the ribosome-nascent chain (RNC) as it emerges from the ribosomes. The SRP-RNC complex is then targeted to the cytoplasmic membrane where it interacts with the SRP receptor FtsY. Interaction with FtsY leads to the transfer of the RNC complex to the Sec translocase for insertion into the membrane, the hydrolysis of GTP by both Ffh and FtsY, and the dissociation of the SRP-FtsY complex into the individual components. The chain is Signal recognition particle protein from Helicobacter pylori (strain J99 / ATCC 700824) (Campylobacter pylori J99).